We begin with the raw amino-acid sequence, 166 residues long: Ribosome maturation factor RimP (166 aa).

Belongs to the RimP family.

The protein localises to the cytoplasm. In terms of biological role, required for maturation of 30S ribosomal subunits. In Paramagnetospirillum magneticum (strain ATCC 700264 / AMB-1) (Magnetospirillum magneticum), this protein is Ribosome maturation factor RimP.